A 91-amino-acid polypeptide reads, in one-letter code: Small ubiquitin-related modifier (91 aa).

In terms of domain architecture, Ubiquitin-like spans 13-91 (EYIKIKVVGQ…EVYQEQLGGF (79 aa)). Residue G90 forms a Glycyl lysine isopeptide (Gly-Lys) (interchain with K-? in acceptor proteins) linkage. A propeptide is located at residue F91.

It belongs to the ubiquitin family. SUMO subfamily. In terms of assembly, covalently attached to tbx-2. Covalently attached to lin-1. Covalently attached to lin-11. Covalently attached to sop-2. Covalently attached to bet-1. In terms of processing, cleavage of precursor form by ulp-1 is necessary for function.

It localises to the cytoplasm. The protein localises to the nucleus. Its subcellular location is the cytoskeleton. It is found in the spindle. The protein resides in the chromosome. It localises to the microtubule organizing center. The protein localises to the centrosome. Its function is as follows. Ubiquitin-like protein which can be covalently attached to target lysines as a monomer. Does not seem to be involved in protein degradation and may function as an antagonist of ubiquitin in the degradation process. Plays a role in a number of cellular processes such as nuclear transport, DNA replication and repair, mitosis and signal transduction. Covalent attachment to its substrates requires prior activation by the E1 complex aos-1-uba-2 and linkage to the E2 enzyme ubc-9, and can be promoted by an E3 ligase such as gei-17. Required for embryonic development, fertility, vulval morphogenesis and inhibition of vulval cell fates. Probably by sumoylating bet-1, prevents muscle myosin depletion in aging adults probably by preventing myoblast growth factor receptor egl-15 overexpression. Plays a role in the attenuation of the let-60/ras pathway. Plays a role in male tail tip morphogenesis. Plays a role in the mitochondrial stress response with its covalent attachment to transcription factors dve-1 and afts-1 negatively regulating the mitochondrial unfolded protein response. The protein is Small ubiquitin-related modifier of Caenorhabditis elegans.